Here is a 112-residue protein sequence, read N- to C-terminus: ATP-dependent Clp protease adapter protein ClpS (112 aa).

Belongs to the ClpS family. In terms of assembly, binds to the N-terminal domain of the chaperone ClpA.

Involved in the modulation of the specificity of the ClpAP-mediated ATP-dependent protein degradation. This chain is ATP-dependent Clp protease adapter protein ClpS, found in Rhodococcus opacus (strain B4).